Here is a 917-residue protein sequence, read N- to C-terminus: Translation initiation factor IF-2 (917 aa).

The segment covering 102–249 (EKSQAEEQAL…KWTAEPKAPE (148 aa)) has biased composition (basic and acidic residues). The disordered stretch occupies residues 102–326 (EKSQAEEQAL…KSSTLQQGFH (225 aa)). Positions 279 to 293 (RRGRTAKAPRAKKNN) are enriched in basic residues. Over residues 294-306 (RHSEKADREEARA) the composition is skewed to basic and acidic residues. The region spanning 416 to 585 (SRAPVVTIMG…LLQAEVLELK (170 aa)) is the tr-type G domain. Residues 425-432 (GHVDHGKT) form a G1 region. 425-432 (GHVDHGKT) lines the GTP pocket. The tract at residues 450–454 (GITQH) is G2. The segment at 471-474 (DTPG) is G3. GTP contacts are provided by residues 471–475 (DTPGH) and 525–528 (NKID). Residues 525 to 528 (NKID) are G4. The G5 stretch occupies residues 561 to 563 (SAK).

The protein belongs to the TRAFAC class translation factor GTPase superfamily. Classic translation factor GTPase family. IF-2 subfamily.

It is found in the cytoplasm. Its function is as follows. One of the essential components for the initiation of protein synthesis. Protects formylmethionyl-tRNA from spontaneous hydrolysis and promotes its binding to the 30S ribosomal subunits. Also involved in the hydrolysis of GTP during the formation of the 70S ribosomal complex. The sequence is that of Translation initiation factor IF-2 (infB) from Proteus vulgaris.